The primary structure comprises 73 residues: Sodium channel neurotoxin MeuNaTxalpha-13 (73 aa).

An N-terminal signal peptide occupies residues 1–5 (TGVES). Residues 7–71 (RDAYIAKPHN…VPIRIPGKCH (65 aa)) form the LCN-type CS-alpha/beta domain. 4 disulfides stabilise this stretch: cysteine 17-cysteine 70, cysteine 21-cysteine 43, cysteine 29-cysteine 53, and cysteine 33-cysteine 55. Residues 72-73 (RR) constitute a propeptide, removed by a carboxypeptidase.

This sequence belongs to the long (4 C-C) scorpion toxin superfamily. Sodium channel inhibitor family. Alpha subfamily. As to expression, expressed by the venom gland.

It localises to the secreted. Its function is as follows. Alpha toxins bind voltage-independently at site-3 of sodium channels (Nav) and inhibit the inactivation of the activated channels, thereby blocking neuronal transmission. The chain is Sodium channel neurotoxin MeuNaTxalpha-13 from Mesobuthus eupeus (Lesser Asian scorpion).